The following is an 814-amino-acid chain: E3 ubiquitin-protein ligase TRIM71 (814 aa).

The RING-type zinc-finger motif lies at 12–76 (CPLCKEMCVS…SLQLRCPVCD (65 aa)). A disordered region spans residues 111–146 (QQQSNGGRTASNRQRSASCSSSGLLRRAPPSQSEPR). Residues 120-138 (ASNRQRSASCSSSGLLRRA) are compositionally biased toward low complexity. Residues 142–189 (QSEPRCSSCDDGNGASSHCLDCQENLCDNCLRAHQRVRLTKDHFIERF) form a B box-type 1; atypical zinc finger. Zn(2+) is bound by residues Cys147, Cys150, Cys171, His175, Cys224, His227, Cys247, and His252. The B box-type 2 zinc finger occupies 219 to 260 (PERLYCQQHDEEVLHFYCDSCSVPICRECTMGRHAGHSFVYL). The stretch at 282 to 370 (RQAIQLSLEQ…INAVQQVLEE (89 aa)) forms a coiled coil. A Filamin repeat occupies 425-526 (SSGAFAALTK…IENSPFKVNV (102 aa)). NHL repeat units lie at residues 539–582 (TLSF…FKPC), 586–629 (HHKF…FTFE), 633–676 (LLKF…FGPD), 680–723 (LNKY…IKPD), 727–770 (AHFL…FEPN), and 774–814 (LCKF…ILAF).

It belongs to the TRIM/RBCC family.

The protein localises to the cytoplasm. It localises to the P-body. The catalysed reaction is S-ubiquitinyl-[E2 ubiquitin-conjugating enzyme]-L-cysteine + [acceptor protein]-L-lysine = [E2 ubiquitin-conjugating enzyme]-L-cysteine + N(6)-ubiquitinyl-[acceptor protein]-L-lysine.. Its pathway is protein modification; protein ubiquitination. Functionally, E3 ubiquitin-protein ligase that cooperates with the microRNAs (miRNAs) machinery and promotes embryonic stem cells proliferation and maintenance. Binds to miRNAs and participates in post-transcriptional repression of transcripts. Required to maintain proliferation and prevent premature differentiation of neural progenitor cells during early neural development. The polypeptide is E3 ubiquitin-protein ligase TRIM71 (trim71) (Xenopus tropicalis (Western clawed frog)).